The primary structure comprises 65 residues: Large ribosomal subunit protein bL35 (65 aa).

Belongs to the bacterial ribosomal protein bL35 family.

The protein is Large ribosomal subunit protein bL35 of Chromobacterium violaceum (strain ATCC 12472 / DSM 30191 / JCM 1249 / CCUG 213 / NBRC 12614 / NCIMB 9131 / NCTC 9757 / MK).